Consider the following 250-residue polypeptide: Ribonuclease PH (250 aa).

Phosphate is bound by residues Arg-86 and 124 to 126 (GTR).

It belongs to the RNase PH family. In terms of assembly, homohexameric ring arranged as a trimer of dimers.

The catalysed reaction is tRNA(n+1) + phosphate = tRNA(n) + a ribonucleoside 5'-diphosphate. Functionally, phosphorolytic 3'-5' exoribonuclease that plays an important role in tRNA 3'-end maturation. Removes nucleotide residues following the 3'-CCA terminus of tRNAs; can also add nucleotides to the ends of RNA molecules by using nucleoside diphosphates as substrates, but this may not be physiologically important. Probably plays a role in initiation of 16S rRNA degradation (leading to ribosome degradation) during starvation. The sequence is that of Ribonuclease PH from Exiguobacterium sibiricum (strain DSM 17290 / CCUG 55495 / CIP 109462 / JCM 13490 / 255-15).